Reading from the N-terminus, the 565-residue chain is Adenine deaminase (565 aa).

Belongs to the metallo-dependent hydrolases superfamily. Adenine deaminase family. It depends on Mn(2+) as a cofactor.

The enzyme catalyses adenine + H2O + H(+) = hypoxanthine + NH4(+). The sequence is that of Adenine deaminase from Gluconobacter oxydans (strain 621H) (Gluconobacter suboxydans).